Here is a 354-residue protein sequence, read N- to C-terminus: MEQCYNRGCGQLFDPQTNNDESCRHHPGEPFFHDAYKGWSCCNKKSVDFTEFLNIKGCTLAKHSNVKPPEPEKPVKDESDKDEVIEVRAPIREALPRPPIDSPLTVIQPTVAPALKDMVFAVKTPAAQKSSDAIEVGTTCKNNGCTYSFTGNSSDFGECTYHPGVPIFHEGMKFWSCCQKRTSDFSQFMAQKGCTYGEHKWVKENDDKKVVQCRYDWHQTATNVVMAIYAKKYDYSQSVIELNPIRLHVNLVFPEQDNARFDLDLELRGIVNVSNASAHMYGTKVEIKLPKLEPGSWSNLNFPNKKLPVVKKSQVEEKKKQEESDEEFFDLDDIKAETSFRLSEMSMQSPNNLD.

16 residues coordinate Zn(2+): cysteine 4, cysteine 9, cysteine 23, histidine 26, cysteine 41, cysteine 42, cysteine 58, histidine 63, cysteine 140, cysteine 145, cysteine 159, histidine 162, cysteine 177, cysteine 178, cysteine 194, and histidine 199. 2 CHORD domains span residues 4–63 (CYNR…LAKH) and 140–199 (CKNN…YGEH). The region spanning 210 to 301 (VVQCRYDWHQ…LEPGSWSNLN (92 aa)) is the CS domain. Phosphoserine is present on residues serine 324 and serine 339.

Interacts with Hsp83.

The protein localises to the cytoplasm. The protein resides in the nucleus. It is found in the cytoskeleton. It localises to the spindle. Its function is as follows. Regulates centrosome duplication and mitotic spindle dynamics. Also involved in controlling the size of dendritic arbors. May act as co-chaperone for Hsp83. During mitotic spindle assembly, regulates microtubule (MT) dynamics by binding to MTs and promoting MT polymerisation. Promotes the elongation and retraction of terminal branches in response to changes in body size, possibly acting downstream of the TORC2 pathway to enable proportional scaling of dendritic arbors. The chain is Cysteine and histidine-rich domain-containing protein morgana from Drosophila melanogaster (Fruit fly).